We begin with the raw amino-acid sequence, 431 residues long: Enolase (431 aa).

Gln-167 contacts (2R)-2-phosphoglycerate. The Proton donor role is filled by Glu-209. Residues Asp-246, Glu-290, and Asp-317 each coordinate Mg(2+). Residues Lys-342, Arg-371, Ser-372, and Lys-393 each contribute to the (2R)-2-phosphoglycerate site. Lys-342 acts as the Proton acceptor in catalysis.

It belongs to the enolase family. As to quaternary structure, component of the RNA degradosome, a multiprotein complex involved in RNA processing and mRNA degradation. It depends on Mg(2+) as a cofactor.

It is found in the cytoplasm. The protein localises to the secreted. Its subcellular location is the cell surface. The enzyme catalyses (2R)-2-phosphoglycerate = phosphoenolpyruvate + H2O. It participates in carbohydrate degradation; glycolysis; pyruvate from D-glyceraldehyde 3-phosphate: step 4/5. Its function is as follows. Catalyzes the reversible conversion of 2-phosphoglycerate (2-PG) into phosphoenolpyruvate (PEP). It is essential for the degradation of carbohydrates via glycolysis. This Erwinia tasmaniensis (strain DSM 17950 / CFBP 7177 / CIP 109463 / NCPPB 4357 / Et1/99) protein is Enolase.